Consider the following 501-residue polypeptide: Putative lon protease homolog (501 aa).

ATP is bound at residue 53–60; that stretch reads GPPGIGKS. The span at 481–494 shows a compositional bias: polar residues; the sequence is SSSQRMSQHGYSSE. A disordered region spans residues 481 to 501; the sequence is SSSQRMSQHGYSSENIDRSYM.

It belongs to the peptidase S16 family.

This Methanothermobacter thermautotrophicus (strain ATCC 29096 / DSM 1053 / JCM 10044 / NBRC 100330 / Delta H) (Methanobacterium thermoautotrophicum) protein is Putative lon protease homolog.